A 370-amino-acid polypeptide reads, in one-letter code: Protein DUF642 L-GALACTONO-1,4-LACTONE-RESPONSIVE GENE 1 (370 aa).

The signal sequence occupies residues 1–22 (MMYQEAALLLALLFISSNVVLS). An N-linked (GlcNAc...) asparagine glycan is attached at asparagine 124.

In terms of tissue distribution, expressed at low levels in roots, seedlings and leaves.

Its subcellular location is the secreted. The protein resides in the cell wall. The chain is Protein DUF642 L-GALACTONO-1,4-LACTONE-RESPONSIVE GENE 1 from Arabidopsis thaliana (Mouse-ear cress).